Consider the following 446-residue polypeptide: Probable inactive lipase MT1628 (446 aa).

It belongs to the AB hydrolase superfamily. Lipase family.

The chain is Probable inactive lipase MT1628 from Mycobacterium tuberculosis (strain CDC 1551 / Oshkosh).